We begin with the raw amino-acid sequence, 141 residues long: S-adenosylmethionine decarboxylase proenzyme (141 aa).

The active-site Schiff-base intermediate with substrate; via pyruvic acid is serine 63. The residue at position 63 (serine 63) is a Pyruvic acid (Ser); by autocatalysis. Residue histidine 68 is the Proton acceptor; for processing activity of the active site. The active-site Proton donor; for catalytic activity is cysteine 83.

This sequence belongs to the prokaryotic AdoMetDC family. Type 1 subfamily. In terms of assembly, heterotetramer of two alpha and two beta chains arranged as a dimer of alpha/beta heterodimers. Pyruvate is required as a cofactor. Post-translationally, is synthesized initially as an inactive proenzyme. Formation of the active enzyme involves a self-maturation process in which the active site pyruvoyl group is generated from an internal serine residue via an autocatalytic post-translational modification. Two non-identical subunits are generated from the proenzyme in this reaction, and the pyruvate is formed at the N-terminus of the alpha chain, which is derived from the carboxyl end of the proenzyme. The post-translation cleavage follows an unusual pathway, termed non-hydrolytic serinolysis, in which the side chain hydroxyl group of the serine supplies its oxygen atom to form the C-terminus of the beta chain, while the remainder of the serine residue undergoes an oxidative deamination to produce ammonia and the pyruvoyl group blocking the N-terminus of the alpha chain.

The enzyme catalyses S-adenosyl-L-methionine + H(+) = S-adenosyl 3-(methylsulfanyl)propylamine + CO2. Its pathway is amine and polyamine biosynthesis; S-adenosylmethioninamine biosynthesis; S-adenosylmethioninamine from S-adenosyl-L-methionine: step 1/1. Functionally, catalyzes the decarboxylation of S-adenosylmethionine to S-adenosylmethioninamine (dcAdoMet), the propylamine donor required for the synthesis of the polyamines spermine and spermidine from the diamine putrescine. In Thermococcus onnurineus (strain NA1), this protein is S-adenosylmethionine decarboxylase proenzyme.